The following is a 671-amino-acid chain: Protein cereblon (671 aa).

The span at 1–11 (MDGEEAADIDE) shows a compositional bias: acidic residues. Disordered stretches follow at residues 1 to 59 (MDGE…VDGD), 104 to 130 (LTGTTTPTPTAPENQAENAPEIEPAQP), and 150 to 187 (GHNVLNPGDDARSISSRHSGSDMSLDSPGSEDDSDAEA). Low complexity-rich tracts occupy residues 39 to 51 (QQQQQMPQTSSGE) and 105 to 115 (TGTTTPTPTAP). A compositionally biased stretch (polar residues) spans 162–173 (SISSRHSGSDMS). The Lon N-terminal domain occupies 309 to 537 (RMLIFMHQHI…IIGSTLKQES (229 aa)). Positions 536–645 (ESLFYCRYCN…LAGSSVRIGK (110 aa)) constitute a CULT domain. 4 residues coordinate Zn(2+): cysteine 541, cysteine 544, cysteine 610, and cysteine 613.

Belongs to the CRBN family. As to quaternary structure, likely a component of a DCX (DDB1-CUL4-X-box) protein ligase complex. May interact with pic/DDB1. Post-translationally, ubiquitinated.

Its subcellular location is the nucleus. Its pathway is protein modification; protein ubiquitination. Substrate recognition component of a DCX (DDB1-CUL4-X-box) E3 protein ligase complex that mediates the ubiquitination and subsequent proteasomal degradation of target proteins. Has an essential role in mediating growth by negatively regulating insulin signaling. It also has a role in maintaining presynaptic function in the neuromuscular junction synapses of third-instar larvae. The polypeptide is Protein cereblon (Drosophila grimshawi (Hawaiian fruit fly)).